We begin with the raw amino-acid sequence, 189 residues long: Protein GrpE (189 aa).

Over residues 1 to 20 (MSDQQHSAPQNAAATASPSD) the composition is skewed to polar residues. The segment at 1-29 (MSDQQHSAPQNAAATASPSDSPEAVEATM) is disordered.

It belongs to the GrpE family. Homodimer.

It localises to the cytoplasm. Its function is as follows. Participates actively in the response to hyperosmotic and heat shock by preventing the aggregation of stress-denatured proteins, in association with DnaK and GrpE. It is the nucleotide exchange factor for DnaK and may function as a thermosensor. Unfolded proteins bind initially to DnaJ; upon interaction with the DnaJ-bound protein, DnaK hydrolyzes its bound ATP, resulting in the formation of a stable complex. GrpE releases ADP from DnaK; ATP binding to DnaK triggers the release of the substrate protein, thus completing the reaction cycle. Several rounds of ATP-dependent interactions between DnaJ, DnaK and GrpE are required for fully efficient folding. The polypeptide is Protein GrpE (Paracidovorax citrulli (strain AAC00-1) (Acidovorax citrulli)).